Consider the following 234-residue polypeptide: UPF0758 protein Rfer_3252 (234 aa).

An MPN domain is found at 112 to 234 (IFATPDAVKH…ALSMAERGLL (123 aa)). Residues His183, His185, and Asp196 each contribute to the Zn(2+) site. A JAMM motif motif is present at residues 183-196 (HNHPSGTVQPSRAD).

It belongs to the UPF0758 family.

This is UPF0758 protein Rfer_3252 from Albidiferax ferrireducens (strain ATCC BAA-621 / DSM 15236 / T118) (Rhodoferax ferrireducens).